The chain runs to 820 residues: Leucine--tRNA ligase (820 aa).

Positions 40 to 51 (PYPSGAGLHVGH) match the 'HIGH' region motif. A 'KMSKS' region motif is present at residues 601 to 605 (KMSKS). Residue Lys-604 coordinates ATP.

It belongs to the class-I aminoacyl-tRNA synthetase family.

The protein localises to the cytoplasm. It carries out the reaction tRNA(Leu) + L-leucine + ATP = L-leucyl-tRNA(Leu) + AMP + diphosphate. This is Leucine--tRNA ligase from Chlamydia caviae (strain ATCC VR-813 / DSM 19441 / 03DC25 / GPIC) (Chlamydophila caviae).